The primary structure comprises 531 residues: High affinity cysteine transporter (531 aa).

At 1–54 (MSKVDVKIGADSISSSDEILVPSRLADVTLAFMEENDAAVPEITPEQEKKLKRK) the chain is on the cytoplasmic side. Residues 55–75 (LFLTIFTFVSAINLLLYMDKA) traverse the membrane as a helical segment. Over 76–97 (TLSYDSILGFFEDTGLTQNTYN) the chain is Lumenal. A helical transmembrane segment spans residues 98 to 118 (TVNTLFYVGFAIGQFPGQYLA). The Cytoplasmic segment spans residues 119–120 (QK). The chain crosses the membrane as a helical span at residues 121–141 (LPLGKFLGGLLATWTILIFLS). Topologically, residues 142–154 (CTAYNFSGVVALR) are lumenal. N146 is a glycosylation site (N-linked (GlcNAc...) asparagine). A helical transmembrane segment spans residues 155 to 175 (FFLGLTESVVIPILITTMGMF). Over 176-186 (FDASERAAAQP) the chain is Cytoplasmic. The chain crosses the membrane as a helical span at residues 187–207 (FFFAACMGSPIPTGFIAYGVL). At 208-218 (HITNPSISLWK) the chain is on the lumenal side. Residues 219-239 (IFTIIIGGLTFIMTVVVILWF) traverse the membrane as a helical segment. Topologically, residues 240–285 (PNNPADVKFFSIQERVWIIRRVQASTGSSIEQKVFKKSQFREAMKD) are cytoplasmic. The helical transmembrane segment at 286–306 (YITWLFGLFFLLQQLANNLPY) threads the bilayer. The Lumenal portion of the chain corresponds to 307 to 324 (QQNLLFEGMGGVDALGST). The helical transmembrane segment at 325–345 (LVSVAGAGFAVVCAFIATLML) threads the bilayer. Topologically, residues 346–352 (AKWKNIS) are cytoplasmic. The helical transmembrane segment at 353–373 (ALTAIFWTLPALVGSIAAAAL) threads the bilayer. Residues 374-378 (PWDNK) are Lumenal-facing. A helical membrane pass occupies residues 379 to 399 (IGILANICMAGQIFGIPFIIA). Topologically, residues 400-413 (LSWASSSASGYTKK) are cytoplasmic. A helical membrane pass occupies residues 414-436 (LTRSSVSLFAMGIANIISPQIWR). Topologically, residues 437-447 (EKDSPRFLPAW) are lumenal. A helical transmembrane segment spans residues 448-468 (IVQIVLSFSLAPAILLLIHFI). Positions 469–498 (LKRRNNQRLKNYDENLQNYLDRIQLIESEN) form a coiled coil. At 469 to 531 (LKRRNNQRLK…LENETFIYPL (63 aa)) the chain is on the cytoplasmic side. Phosphoserine occurs at positions 500 and 501.

The protein belongs to the major facilitator superfamily. Allantoate permease family.

It localises to the cell membrane. The protein localises to the endoplasmic reticulum membrane. Functionally, high affinity cysteine-specific transporter. Major contributor to cysteine transport when cysteine, at low concentrations, is provided as the sole sulfur source. This is High affinity cysteine transporter (YCT1) from Saccharomyces cerevisiae (strain ATCC 204508 / S288c) (Baker's yeast).